The sequence spans 833 residues: Endoribonuclease YSH1 (833 aa).

Zn(2+)-binding residues include histidine 84, histidine 86, aspartate 88, histidine 89, histidine 174, and aspartate 195. Histidine 443 (proton donor) is an active-site residue. A Zn(2+)-binding site is contributed by histidine 465. Disordered regions lie at residues 600-624, 685-707, and 728-767; these read RRAK…SKQE, KRSS…HSAT, and VAPV…DAQL. Basic and acidic residues-rich tracts occupy residues 694–707 and 744–759; these read SHDL…HSAT and DKNK…MKTD.

This sequence belongs to the metallo-beta-lactamase superfamily. RNA-metabolizing metallo-beta-lactamase-like family. CPSF2/YSH1 subfamily.

It is found in the nucleus. In terms of biological role, component of the cleavage factor I (CF I) involved in pre-mRNA 3'-end processing. This Gibberella zeae (strain ATCC MYA-4620 / CBS 123657 / FGSC 9075 / NRRL 31084 / PH-1) (Wheat head blight fungus) protein is Endoribonuclease YSH1 (YSH1).